The following is a 396-amino-acid chain: Elongation factor Tu (396 aa).

Residues 10–206 form the tr-type G domain; that stretch reads KPHCNIGTIG…AVDSYIPQPE (197 aa). The segment at 19 to 26 is G1; the sequence is GHVDHGKT. 19–26 is a binding site for GTP; the sequence is GHVDHGKT. Thr26 is a Mg(2+) binding site. The interval 60–64 is G2; it reads GITIS. Residues 81–84 form a G3 region; sequence DCPG. GTP is bound by residues 81–85 and 136–139; these read DCPGH and NKCD. The tract at residues 136–139 is G4; that stretch reads NKCD. Residues 174 to 176 form a G5 region; that stretch reads SAL.

The protein belongs to the TRAFAC class translation factor GTPase superfamily. Classic translation factor GTPase family. EF-Tu/EF-1A subfamily. As to quaternary structure, monomer.

It localises to the cytoplasm. The catalysed reaction is GTP + H2O = GDP + phosphate + H(+). In terms of biological role, GTP hydrolase that promotes the GTP-dependent binding of aminoacyl-tRNA to the A-site of ribosomes during protein biosynthesis. The polypeptide is Elongation factor Tu (Rhodopseudomonas palustris (strain BisA53)).